Consider the following 393-residue polypeptide: Putative acid--amine ligase HI_0929 (393 aa).

103 to 105 (RFD) serves as a coordination point for ATP. D105, E117, and N119 together coordinate Mg(2+). Residues K267, K303, G310, Q343, and 378–380 (AVT) contribute to the ATP site.

It belongs to the glutathionylspermidine synthase preATP-grasp family.

In terms of biological role, may be a ligase forming an amide bond. Shows ATPase activity. The sequence is that of Putative acid--amine ligase HI_0929 from Haemophilus influenzae (strain ATCC 51907 / DSM 11121 / KW20 / Rd).